A 249-amino-acid chain; its full sequence is ATP synthase subunit a 1 (249 aa).

Helical transmembrane passes span 26 to 46, 84 to 104, 114 to 134, 143 to 163, 193 to 213, and 216 to 236; these read FTNV…FLYL, FFPF…LGLF, IIVT…YGFF, LFVP…IEII, FVVS…LPLI, and VAIT…FTVL.

The protein belongs to the ATPase A chain family. F-type ATPases have 2 components, CF(1) - the catalytic core - and CF(0) - the membrane proton channel. CF(1) has five subunits: alpha(3), beta(3), gamma(1), delta(1), epsilon(1). CF(0) has three main subunits: a(1), b(2) and c(9-12). The alpha and beta chains form an alternating ring which encloses part of the gamma chain. CF(1) is attached to CF(0) by a central stalk formed by the gamma and epsilon chains, while a peripheral stalk is formed by the delta and b chains.

It localises to the cell inner membrane. In terms of biological role, key component of the proton channel; it plays a direct role in the translocation of protons across the membrane. This is ATP synthase subunit a 1 from Brucella anthropi (strain ATCC 49188 / DSM 6882 / CCUG 24695 / JCM 21032 / LMG 3331 / NBRC 15819 / NCTC 12168 / Alc 37) (Ochrobactrum anthropi).